Reading from the N-terminus, the 291-residue chain is Membrane protein insertase YidC (291 aa).

Residues 1-19 (MKKKALLPLLLGVMVFLAG) form the signal peptide. A lipid anchor (N-palmitoyl cysteine) is attached at cysteine 20. Cysteine 20 carries the S-diacylglycerol cysteine lipid modification. The next 4 membrane-spanning stretches (helical) occupy residues 56 to 76 (YGIA…PFML), 134 to 154 (ALGC…YFVL), 170 to 190 (WFNL…LYFI), and 211 to 231 (MIVS…ALGL). The segment at 266 to 291 (FKENNSNSNKKGKNTQVVSKNNKKKK) is disordered.

This sequence belongs to the OXA1/ALB3/YidC family. Type 2 subfamily.

It is found in the cell membrane. In terms of biological role, required for the insertion and/or proper folding and/or complex formation of integral membrane proteins into the membrane. Involved in integration of membrane proteins that insert both dependently and independently of the Sec translocase complex, as well as at least some lipoproteins. The chain is Membrane protein insertase YidC from Staphylococcus haemolyticus (strain JCSC1435).